Consider the following 243-residue polypeptide: Ribosomal RNA small subunit methyltransferase J (243 aa).

Residues 112-113 and Asp164 each bind S-adenosyl-L-methionine; that span reads ER.

It belongs to the methyltransferase superfamily. RsmJ family.

The protein localises to the cytoplasm. The catalysed reaction is guanosine(1516) in 16S rRNA + S-adenosyl-L-methionine = N(2)-methylguanosine(1516) in 16S rRNA + S-adenosyl-L-homocysteine + H(+). Specifically methylates the guanosine in position 1516 of 16S rRNA. The chain is Ribosomal RNA small subunit methyltransferase J from Legionella pneumophila (strain Lens).